Consider the following 250-residue polypeptide: 5'-nucleotidase SurE (250 aa).

A divalent metal cation is bound by residues aspartate 8, aspartate 9, serine 39, and asparagine 95.

This sequence belongs to the SurE nucleotidase family. Requires a divalent metal cation as cofactor.

It is found in the cytoplasm. It carries out the reaction a ribonucleoside 5'-phosphate + H2O = a ribonucleoside + phosphate. In terms of biological role, nucleotidase that shows phosphatase activity on nucleoside 5'-monophosphates. The protein is 5'-nucleotidase SurE of Cupriavidus taiwanensis (strain DSM 17343 / BCRC 17206 / CCUG 44338 / CIP 107171 / LMG 19424 / R1) (Ralstonia taiwanensis (strain LMG 19424)).